The chain runs to 322 residues: Follistatin-A (322 aa).

Residues 1 to 32 form the signal peptide; that stretch reads MLRMLKRQQLHPGMILLLFWLCYLIEDQKVQA. The 74-residue stretch at 33–106 folds into the TB domain; it reads GNCWLQQGKN…TCDNVDCGPG (74 aa). 8 disulfide bridges follow: Cys35-Cys58, Cys45-Cys91, Cys59-Cys94, Cys98-Cys109, Cys103-Cys119, Cys121-Cys153, Cys125-Cys146, and Cys135-Cys167. The N-linked (GlcNAc...) asparagine glycan is linked to Asn75. Residues 97–120 enclose the Follistatin-like 1 domain; that stretch reads TCDNVDCGPGKRCKMNRRSKPRCV. Kazal-like domains lie at 103 to 169, 189 to 244, and 267 to 321; these read CGPG…KCKK, NAYC…KCIK, and RGRC…SCNC. The N-linked (GlcNAc...) asparagine glycan is linked to Asn127. The Follistatin-like 2 domain maps to 170–193; sequence TCRDVLCPGSSTCVVDQTNNAYCV. Disulfide bonds link Cys195–Cys228, Cys199–Cys221, and Cys210–Cys242. The Follistatin-like 3 domain maps to 247 to 271; it reads SCDDIHCSAGKKCLWDAKMSRGRCA. Cystine bridges form between Cys273/Cys305, Cys277/Cys298, and Cys287/Cys319. The N-linked (GlcNAc...) asparagine glycan is linked to Asn291.

Monomer. As to expression, not expressed in the organizer region. Expression in gastrulating embryos is confined to anterior and paraxial regions, which give rise to head mesoderm and the first five somites. In addition, expressed transiently in a subset of cells in the posterior notochord anlage. Later, expression is seen in brain, eyes and somites.

Functionally, binds directly to activin and functions as an activin antagonist. Specific inhibitor of the biosynthesis and secretion of pituitary follicle stimulating hormone (fsh). Inhibits bmp-signaling during later stages of development including late phases of dorsoventral patterning, to refine the early pattern set up by the interaction of chordino and bmp2/4. Not involved in organizer function or early phases of dorsoventral pattern formation. The chain is Follistatin-A (fsta) from Danio rerio (Zebrafish).